Here is a 267-residue protein sequence, read N- to C-terminus: Large ribosomal subunit protein uL4 (267 aa).

It belongs to the universal ribosomal protein uL4 family. As to quaternary structure, part of the 50S ribosomal subunit.

In terms of biological role, one of the primary rRNA binding proteins, this protein initially binds near the 5'-end of the 23S rRNA. It is important during the early stages of 50S assembly. It makes multiple contacts with different domains of the 23S rRNA in the assembled 50S subunit and ribosome. Functionally, forms part of the polypeptide exit tunnel. The chain is Large ribosomal subunit protein uL4 from Saccharolobus islandicus (strain Y.N.15.51 / Yellowstone #2) (Sulfolobus islandicus).